The primary structure comprises 373 residues: MTDNSNIRVVVGMSGGVDSSVTALLLKEQGYDVIGVFMKNWDDTDEFGVCTATEDYKDVAAVADQIGIPYYSVNFEKEYWDRVFEYFLAEYRAGRTPNPDVMCNKEIKFKAFLDYAMTLGADYVATGHYAQVTRDENGIVHMLRGADNNKDQTYFLSQLSQEQLQKTLFPLGHLQKPEVRRIAEEAGLATAKKKDSTGICFIGEKNFKDFLGQYLPAQPGRMMTVDGRDMGEHAGLMYYTIGQRGGLGIGGQHGGDNKPWFVVGKDLSKNILYVGQGFYHDSLMSTSLTASEIHFTRDMPNEFKLECTAKFRYRQPDSKVKVYVKGNQARVVFDDLQRAITPGQAVVFYNEQECLGGGMIDQAYRDDKICQYI.

ATP contacts are provided by residues 12–19 (GMSGGVDS) and methionine 38. An interaction with target base in tRNA region spans residues 98-100 (NPD). Cysteine 103 functions as the Nucleophile in the catalytic mechanism. Cysteine 103 and cysteine 200 are joined by a disulfide. Residue glycine 127 coordinates ATP. Positions 150-152 (KDQ) are interaction with tRNA. Catalysis depends on cysteine 200, which acts as the Cysteine persulfide intermediate. An interaction with tRNA region spans residues 312-313 (RY).

Belongs to the MnmA/TRMU family.

It is found in the cytoplasm. It catalyses the reaction S-sulfanyl-L-cysteinyl-[protein] + uridine(34) in tRNA + AH2 + ATP = 2-thiouridine(34) in tRNA + L-cysteinyl-[protein] + A + AMP + diphosphate + H(+). Functionally, catalyzes the 2-thiolation of uridine at the wobble position (U34) of tRNA, leading to the formation of s(2)U34. The polypeptide is tRNA-specific 2-thiouridylase MnmA (Streptococcus agalactiae serotype Ia (strain ATCC 27591 / A909 / CDC SS700)).